The sequence spans 982 residues: Protein phosphatase 1 regulatory subunit 12B (982 aa).

Basic and acidic residues predominate over residues 1–24; sequence MAELEHLGGKRAESARMRRAEQLR. The tract at residues 1 to 50 is disordered; it reads MAELEHLGGKRAESARMRRAEQLRRWRGSLTEQEPAERRGAGRQPLTRRG. Serine 29 is modified (phosphoserine). ANK repeat units follow at residues 57-86, 90-119, 123-152, 216-245, and 249-278; these read EDGAVFLAACSSGDTDEVRKLLARGADINT, DGLTALHQACIDENLDMVKFLVENRANVNQ, EGWTPLHAAASCGYLNIAEYFINHGASVGI, SGATALHVAAAKGYSEVLRLLIQAGYELNV, and DGWTPLHAAAHWGVKEACSILAEALCDMDI. Disordered stretches follow at residues 342 to 517, 556 to 579, 606 to 864, and 918 to 948; these read EETP…RESA, RTPHKSQADTTAEKTADNVSSSTP, TDSS…EARE, and AQQKQEKTSDRSSVLEMEKRERRALERKMSE. Acidic residues predominate over residues 362 to 374; that stretch reads SEEEEGEDEASES. Residues 375 to 385 show a composition bias toward basic and acidic residues; sequence ETEKEADKKPE. A compositionally biased stretch (polar residues) spans 389–401; that stretch reads NHSNSESKSSITE. Low complexity predominate over residues 411-421; that stretch reads FSASSARRFSS. A Phosphothreonine modification is found at threonine 445. A compositionally biased stretch (low complexity) spans 466–478; it reads SSIYRSSSSPRIS. Residues 482–491 show a composition bias toward basic and acidic residues; the sequence is DNKDKERENK. The segment covering 623–632 has biased composition (basic and acidic residues); it reads VRDEEAESLR. Positions 633-643 are enriched in basic residues; sequence KARSRQARQTR. Position 646 is a phosphothreonine (threonine 646). Positions 656 to 680 are enriched in basic and acidic residues; the sequence is EAERTFSRSRAERQAQEQPREKPTD. A compositionally biased stretch (low complexity) spans 731 to 742; sequence TTPASPSTSRPS. The segment covering 743 to 755 has biased composition (polar residues); that stretch reads LYTSSHLLWTNRF. The segment covering 797–807 has biased composition (basic residues); it reads ERRRPKERRRG. A Phosphothreonine modification is found at threonine 808. The segment covering 824–836 has biased composition (basic and acidic residues); it reads EEVKETWHERLSR. At serine 839 the chain carries Phosphoserine. Over residues 840-849 the composition is skewed to polar residues; sequence GGSNPTTSDS. 3 stretches are compositionally biased toward basic and acidic residues: residues 850–864, 918–927, and 933–948; these read YGDRASARARREARE, AQQKQEKTSD, and EMEKRERRALERKMSE. Position 947 is a phosphoserine (serine 947).

PP1 comprises a catalytic subunit, PPP1CA, PPP1CB or PPP1CC, and one or several targeting or regulatory subunits. PPP1R12B mediates binding to myosin. Isoform 3 and isoform 4 bind PPP1R12A, but not isoform 1 of PPP1R12B itself. Binds IL16. Detected in skeletal muscle, fetal and adult heart, brain, placenta, kidney, spleen, thymus, pancreas and lung. Isoform 3 and isoform 4 are heart specific.

Its subcellular location is the cytoplasm. It is found in the cytoskeleton. It localises to the stress fiber. Functionally, regulates myosin phosphatase activity. Augments Ca(2+) sensitivity of the contractile apparatus. In Homo sapiens (Human), this protein is Protein phosphatase 1 regulatory subunit 12B (PPP1R12B).